A 126-amino-acid polypeptide reads, in one-letter code: Prefoldin subunit beta (126 aa).

This sequence belongs to the prefoldin subunit beta family. Heterohexamer of two alpha and four beta subunits.

The protein localises to the cytoplasm. In terms of biological role, molecular chaperone capable of stabilizing a range of proteins. Seems to fulfill an ATP-independent, HSP70-like function in archaeal de novo protein folding. The protein is Prefoldin subunit beta (pfdB) of Pyrobaculum aerophilum (strain ATCC 51768 / DSM 7523 / JCM 9630 / CIP 104966 / NBRC 100827 / IM2).